The primary structure comprises 430 residues: C-terminal-binding protein 1 (430 aa).

The interaction with GLIS2 1 stretch occupies residues Met1–Ala59. Residues Ser89, Ile169–Val174, Asp193, Cys226–Asn232, Thr253–Arg255, and Asp279 contribute to the NAD(+) site. The active site involves Arg255. The segment at Ala277–Thr349 is interaction with GLIS2 2. Residue Glu284 is part of the active site. Ser289 is subject to Phosphoserine. His304 (proton donor) is an active-site residue. A disordered region spans residues Ser398–Leu430. Ser412 is modified (phosphoserine). Lys418 is covalently cross-linked (Glycyl lysine isopeptide (Lys-Gly) (interchain with G-Cter in SUMO)). Residues Pro419–Leu430 show a composition bias toward basic and acidic residues.

The protein belongs to the D-isomer specific 2-hydroxyacid dehydrogenase family. In terms of assembly, homo- or heterodimer. Heterodimer with CTBP2. Interacts with ELK3 (via its PXDLS motif). Interacts with RBBP8 (via its PXDLS motif); the interaction is disrupted by binding to adenovirus E1A. Interacts with PNN, MECOM and ZFHX1B. Interacts with ZNF366 (via PXDLS motif). Interaction with SATB1 (non-acetylated form); the interaction stabilizes its attachment to DNA and promotes transcription repression. Interacts with PRDM16; the interaction represses white adipose tissue (WAT)-specific genes expression. Interacts with GLIS2, HIPK2, FOXP1, FOXP2, HDAC4, HDAC5, HDAC9, NRIP1 and WIZ. Interacts with ZNF217. Interacts with BCL6; the interaction is required for BCL6 transcriptional autoinhibition and inhibition of some BCL6 target genes. Interacts with IKZF4. Interacts with MCRIP1 (unphosphorylated form, via the PXDLS motif); competitively inhibiting CTBP-ZEB1 interaction. Interacts with Bassoon/BSN; this interaction targets and anchors CTBP1 to presynapses. Interacts with SIMC1. The cofactor is NAD(+). In terms of processing, the level of phosphorylation appears to be regulated during the cell cycle. Phosphorylation by HIPK2 on Ser-412 induces proteasomal degradation. Post-translationally, ADP-ribosylated; when cells are exposed to brefeldin A. Sumoylation on Lys-418 is promoted by the E3 SUMO-protein ligase CBX4.

The protein resides in the cytoplasm. Its subcellular location is the nucleus. The protein localises to the synapse. It is found in the synaptosome. In terms of biological role, corepressor targeting diverse transcription regulators such as GLIS2 or BCL6. Has dehydrogenase activity. Involved in controlling the equilibrium between tubular and stacked structures in the Golgi complex. Functions in brown adipose tissue (BAT) differentiation. The chain is C-terminal-binding protein 1 (Ctbp1) from Rattus norvegicus (Rat).